The primary structure comprises 191 residues: MEGQDDYQLLYEGRRSQPAAPPEEEEVSTLPRGRRQRGVEAGEGSAGREESRGHRRSQHRDRSAGGSMGSNVIGLPGVNPPTSEVVVMEPRSFDEMAQVIQYLRERKTVIMNLTLMDPAEAQRSVDFVAGGTYAIDGHQERIGENIFLFTPSTVMVSTPSSQVVQPLQRPLQSPTPLWPSTYEHLQAVGQH.

The disordered stretch occupies residues 1–77 (MEGQDDYQLL…MGSNVIGLPG (77 aa)).

This sequence belongs to the SepF family. As to quaternary structure, homodimer. Interacts with FtsZ.

It localises to the cytoplasm. Functionally, cell division protein that is part of the divisome complex and is recruited early to the Z-ring. Probably stimulates Z-ring formation, perhaps through the cross-linking of FtsZ protofilaments. Its function overlaps with FtsA. The chain is Cell division protein SepF from Synechococcus sp. (strain JA-2-3B'a(2-13)) (Cyanobacteria bacterium Yellowstone B-Prime).